A 65-amino-acid chain; its full sequence is Large ribosomal subunit protein bL35 (65 aa).

It belongs to the bacterial ribosomal protein bL35 family.

This is Large ribosomal subunit protein bL35 from Neisseria meningitidis serogroup A / serotype 4A (strain DSM 15465 / Z2491).